Reading from the N-terminus, the 289-residue chain is MSNESNDLEKNISHLDPTGVDNAYIPPEQPETKHSRFNIDRDTLRNHFIAAVGEFCGTFMFLWCAYVICNVANHDVALTTEPEGSHPGQLIMIALGFGFSVMFSIWCFAGVSGGALNPAVSLSLCLARAISPARCVVMWFPQIIAGMAAGGAASAMTPGKVLFTNALGLGCSRSRGLFLEMFGTAVLCLTVLMTAVEKRETNFMAALPIGISLFMAHMALTGYTGTGVNPARSLGAAVAARYFPHYHWIYWIGPLLGAFLAWSVWQLLQILDYTTYVNAEKAAGQKKED.

The tract at residues 1–36 (MSNESNDLEKNISHLDPTGVDNAYIPPEQPETKHSR) is disordered. Residues 1 to 47 (MSNESNDLEKNISHLDPTGVDNAYIPPEQPETKHSRFNIDRDTLRNH) are Cytoplasmic-facing. The chain crosses the membrane as a helical span at residues 48 to 68 (FIAAVGEFCGTFMFLWCAYVI). The Extracellular segment spans residues 69–90 (CNVANHDVALTTEPEGSHPGQL). A helical transmembrane segment spans residues 91-111 (IMIALGFGFSVMFSIWCFAGV). Residues 112–135 (SGGALNPAVSLSLCLARAISPARC) lie on the Cytoplasmic side of the membrane. The NPA 1 motif lies at 117–119 (NPA). A helical membrane pass occupies residues 136–156 (VVMWFPQIIAGMAAGGAASAM). Residues 157 to 175 (TPGKVLFTNALGLGCSRSR) are Extracellular-facing. The helical transmembrane segment at 176–196 (GLFLEMFGTAVLCLTVLMTAV) threads the bilayer. The Cytoplasmic portion of the chain corresponds to 197–202 (EKRETN). Residues 203–223 (FMAALPIGISLFMAHMALTGY) form a helical membrane-spanning segment. Residues 224-247 (TGTGVNPARSLGAAVAARYFPHYH) lie on the Extracellular side of the membrane. Positions 229-231 (NPA) match the NPA 2 motif. A helical membrane pass occupies residues 248–268 (WIYWIGPLLGAFLAWSVWQLL). Residues 269–289 (QILDYTTYVNAEKAAGQKKED) are Cytoplasmic-facing.

It belongs to the MIP/aquaporin (TC 1.A.8) family.

The protein resides in the endoplasmic reticulum membrane. Its subcellular location is the cell membrane. Functionally, water channel required to facilitate the transport of water across membranes. Involved in freeze tolerance, osmotolerance and cell flocculation in liquid cultures. Is non-functional in most laboratory strains. The polypeptide is Aquaporin-2 (AQY2) (Saccharomyces cerevisiae (Baker's yeast)).